Consider the following 505-residue polypeptide: Maturase K (505 aa).

Belongs to the intron maturase 2 family. MatK subfamily.

The protein localises to the plastid. It localises to the chloroplast. In terms of biological role, usually encoded in the trnK tRNA gene intron. Probably assists in splicing its own and other chloroplast group II introns. The protein is Maturase K of Ulmus parvifolia (Chinese elm).